The sequence spans 612 residues: Dihydroxy-acid dehydratase (612 aa).

Asp81 contributes to the Mg(2+) binding site. A [2Fe-2S] cluster-binding site is contributed by Cys122. Mg(2+) is bound by residues Asp123 and Lys124. Lys124 is subject to N6-carboxylysine. Position 193 (Cys193) interacts with [2Fe-2S] cluster. Position 489 (Glu489) interacts with Mg(2+). Ser515 acts as the Proton acceptor in catalysis.

It belongs to the IlvD/Edd family. In terms of assembly, homodimer. [2Fe-2S] cluster serves as cofactor. Requires Mg(2+) as cofactor.

The catalysed reaction is (2R)-2,3-dihydroxy-3-methylbutanoate = 3-methyl-2-oxobutanoate + H2O. It catalyses the reaction (2R,3R)-2,3-dihydroxy-3-methylpentanoate = (S)-3-methyl-2-oxopentanoate + H2O. It functions in the pathway amino-acid biosynthesis; L-isoleucine biosynthesis; L-isoleucine from 2-oxobutanoate: step 3/4. Its pathway is amino-acid biosynthesis; L-valine biosynthesis; L-valine from pyruvate: step 3/4. Its function is as follows. Functions in the biosynthesis of branched-chain amino acids. Catalyzes the dehydration of (2R,3R)-2,3-dihydroxy-3-methylpentanoate (2,3-dihydroxy-3-methylvalerate) into 2-oxo-3-methylpentanoate (2-oxo-3-methylvalerate) and of (2R)-2,3-dihydroxy-3-methylbutanoate (2,3-dihydroxyisovalerate) into 2-oxo-3-methylbutanoate (2-oxoisovalerate), the penultimate precursor to L-isoleucine and L-valine, respectively. This is Dihydroxy-acid dehydratase from Stutzerimonas stutzeri (strain A1501) (Pseudomonas stutzeri).